The following is a 184-amino-acid chain: uncharacterized protein (184 aa).

The signal sequence occupies residues 1-20; that stretch reads MKKQILALVCGVIFSSSTWA.

To E.coli YtfJ.

It localises to the periplasm. This is an uncharacterized protein from Haemophilus influenzae (strain ATCC 51907 / DSM 11121 / KW20 / Rd).